Reading from the N-terminus, the 147-residue chain is Hemoglobin subunit beta (147 aa).

The Globin domain occupies 3-147; the sequence is EWTDFERATI…VVSSLGRQYH (145 aa). Positions 64 and 93 each coordinate heme b.

The protein belongs to the globin family. Hb 1 is a heterotetramer of two alpha-1 and two beta chains. Hb 2 is a heterotetramer of two alpha-2 and two beta chains. Red blood cells.

Involved in oxygen transport from gills to the various peripheral tissues. This is Hemoglobin subunit beta (hbb) from Cottoperca gobio (Frogmouth).